An 84-amino-acid chain; its full sequence is Serine protease inhibitor Kazal-type 2 (84 aa).

A signal peptide spans 1 to 23 (MALSVLRLALLLLAVTFAASLIP). Q24 bears the Pyrrolidone carboxylic acid mark. In terms of domain architecture, Kazal-like spans 30–84 (KYRTPNCSQYRLPGCPRHFNPVCGSDMSTYANECTLCMKIREGGHNIKIIRNGPC). 3 disulfides stabilise this stretch: C36-C66, C44-C63, and C52-C84.

As to expression, expressed in epididymis (at protein level).

The protein localises to the secreted. The protein resides in the cytoplasmic vesicle. Its subcellular location is the secretory vesicle. It localises to the acrosome. Functionally, as a strong inhibitor of acrosin, it is required for normal spermiogenesis. It probably hinders premature activation of proacrosin and other proteases, thus preventing the cascade of events leading to spermiogenesis defects. May be involved in the regulation of serine protease-dependent germ cell apoptosis. It also inhibits trypsin. This chain is Serine protease inhibitor Kazal-type 2 (SPINK2), found in Homo sapiens (Human).